We begin with the raw amino-acid sequence, 409 residues long: Proteasome-activating nucleotidase (409 aa).

Residues 1 to 22 are disordered; it reads MTLSSAGGSRSHRHNGGHSERD. Residues 23–58 are a coiled coil; the sequence is VEIRILKDKVRSLTKEKISLQKELEYYKNEITKLLS. ATP-binding positions include 183 to 188 and H322; that span reads GTGKTL.

This sequence belongs to the AAA ATPase family. In terms of assembly, homohexamer. The hexameric complex has a two-ring architecture resembling a top hat that caps the 20S proteasome core at one or both ends. Upon ATP-binding, the C-terminus of PAN interacts with the alpha-rings of the proteasome core by binding to the intersubunit pockets.

It localises to the cytoplasm. Its function is as follows. ATPase which is responsible for recognizing, binding, unfolding and translocation of substrate proteins into the archaeal 20S proteasome core particle. Is essential for opening the gate of the 20S proteasome via an interaction with its C-terminus, thereby allowing substrate entry and access to the site of proteolysis. Thus, the C-termini of the proteasomal ATPase function like a 'key in a lock' to induce gate opening and therefore regulate proteolysis. Unfolding activity requires energy from ATP hydrolysis, whereas ATP binding alone promotes ATPase-20S proteasome association which triggers gate opening, and supports translocation of unfolded substrates. This chain is Proteasome-activating nucleotidase, found in Aeropyrum pernix (strain ATCC 700893 / DSM 11879 / JCM 9820 / NBRC 100138 / K1).